The sequence spans 306 residues: Acetylglutamate kinase (306 aa).

Substrate contacts are provided by residues 75–76 (GG), R97, and N197.

It belongs to the acetylglutamate kinase family. ArgB subfamily.

It localises to the cytoplasm. It catalyses the reaction N-acetyl-L-glutamate + ATP = N-acetyl-L-glutamyl 5-phosphate + ADP. It participates in amino-acid biosynthesis; L-arginine biosynthesis; N(2)-acetyl-L-ornithine from L-glutamate: step 2/4. In terms of biological role, catalyzes the ATP-dependent phosphorylation of N-acetyl-L-glutamate. The polypeptide is Acetylglutamate kinase (Streptomyces coelicolor (strain ATCC BAA-471 / A3(2) / M145)).